The following is a 544-amino-acid chain: Chaperonin GroEL 1 (544 aa).

Residues 29 to 32 (TLGP), 86 to 90 (DGTTT), Gly413, 479 to 481 (NAA), and Asp495 each bind ATP. The interval 525–544 (PEPKDNAPAGAGAGGGDFDY) is disordered. Positions 535–544 (AGAGGGDFDY) are enriched in gly residues.

The protein belongs to the chaperonin (HSP60) family. As to quaternary structure, forms a cylinder of 14 subunits composed of two heptameric rings stacked back-to-back. Interacts with the co-chaperonin GroES.

The protein resides in the cytoplasm. It catalyses the reaction ATP + H2O + a folded polypeptide = ADP + phosphate + an unfolded polypeptide.. Functionally, together with its co-chaperonin GroES, plays an essential role in assisting protein folding. The GroEL-GroES system forms a nano-cage that allows encapsulation of the non-native substrate proteins and provides a physical environment optimized to promote and accelerate protein folding. In Nostoc sp. (strain PCC 7120 / SAG 25.82 / UTEX 2576), this protein is Chaperonin GroEL 1.